We begin with the raw amino-acid sequence, 353 residues long: Protein RecA (353 aa).

Gly67 to Thr74 lines the ATP pocket.

Belongs to the RecA family.

It is found in the cytoplasm. Functionally, can catalyze the hydrolysis of ATP in the presence of single-stranded DNA, the ATP-dependent uptake of single-stranded DNA by duplex DNA, and the ATP-dependent hybridization of homologous single-stranded DNAs. It interacts with LexA causing its activation and leading to its autocatalytic cleavage. In Shewanella loihica (strain ATCC BAA-1088 / PV-4), this protein is Protein RecA.